Reading from the N-terminus, the 292-residue chain is Feruloyl esterase B (292 aa).

An N-terminal signal peptide occupies residues 1–18 (MLPRTLLGLALTAATGLC). N-linked (GlcNAc...) asparagine glycosylation is found at N88, N117, N179, and N245.

This sequence belongs to the carbohydrate esterase 1 (CE1) family. Feruloyl esterase type B subfamily.

Its subcellular location is the secreted. The enzyme catalyses feruloyl-polysaccharide + H2O = ferulate + polysaccharide.. Involved in degradation of plant cell walls. Hydrolyzes of the feruloyl-arabinose ester bond in arabinoxylans as well as the feruloyl-galactose and feruloyl-arabinose ester bonds in pectin. The polypeptide is Feruloyl esterase B (fae-1) (Neurospora crassa (strain ATCC 24698 / 74-OR23-1A / CBS 708.71 / DSM 1257 / FGSC 987)).